The sequence spans 352 residues: Photosystem II D2 protein (352 aa).

Position 2 is an N-acetylthreonine (Thr-2). Thr-2 is subject to Phosphothreonine. Residues 40–60 form a helical membrane-spanning segment; sequence TAYLALGGWLTGTTFVTSWYT. Residue His-117 coordinates chlorophyll a. Residues 124-140 traverse the membrane as a helical segment; the sequence is GFMLRQFEIARSVKLRP. Pheophytin a-binding residues include Gln-129 and Asn-142. The helical transmembrane segment at 152–165 threads the bilayer; it reads VFVSVFLIYPLGQS. His-197 provides a ligand contact to chlorophyll a. Residues 207–227 traverse the membrane as a helical segment; the sequence is AALLCAIHGATVENTLFEDGD. Residues His-214 and Phe-261 each coordinate a plastoquinone. His-214 serves as a coordination point for Fe cation. Fe cation is bound at residue His-268. Residues 278 to 294 form a helical membrane-spanning segment; it reads GLWMSALGVVGLALNLR.

This sequence belongs to the reaction center PufL/M/PsbA/D family. In terms of assembly, PSII is composed of 1 copy each of membrane proteins PsbA, PsbB, PsbC, PsbD, PsbE, PsbF, PsbH, PsbI, PsbJ, PsbK, PsbL, PsbM, PsbT, PsbX, PsbY, PsbZ, Psb30/Ycf12, at least 3 peripheral proteins of the oxygen-evolving complex and a large number of cofactors. It forms dimeric complexes. The cofactor is The D1/D2 heterodimer binds P680, chlorophylls that are the primary electron donor of PSII, and subsequent electron acceptors. It shares a non-heme iron and each subunit binds pheophytin, quinone, additional chlorophylls, carotenoids and lipids. There is also a Cl(-1) ion associated with D1 and D2, which is required for oxygen evolution. The PSII complex binds additional chlorophylls, carotenoids and specific lipids..

The protein localises to the plastid. Its subcellular location is the chloroplast thylakoid membrane. The catalysed reaction is 2 a plastoquinone + 4 hnu + 2 H2O = 2 a plastoquinol + O2. Functionally, photosystem II (PSII) is a light-driven water:plastoquinone oxidoreductase that uses light energy to abstract electrons from H(2)O, generating O(2) and a proton gradient subsequently used for ATP formation. It consists of a core antenna complex that captures photons, and an electron transfer chain that converts photonic excitation into a charge separation. The D1/D2 (PsbA/PsbD) reaction center heterodimer binds P680, the primary electron donor of PSII as well as several subsequent electron acceptors. D2 is needed for assembly of a stable PSII complex. In Pleurastrum terricola (Filamentous green alga), this protein is Photosystem II D2 protein.